Here is a 270-residue protein sequence, read N- to C-terminus: Tryptophan synthase alpha chain (270 aa).

Catalysis depends on proton acceptor residues E57 and D68.

Belongs to the TrpA family. As to quaternary structure, tetramer of two alpha and two beta chains.

The catalysed reaction is (1S,2R)-1-C-(indol-3-yl)glycerol 3-phosphate + L-serine = D-glyceraldehyde 3-phosphate + L-tryptophan + H2O. It functions in the pathway amino-acid biosynthesis; L-tryptophan biosynthesis; L-tryptophan from chorismate: step 5/5. In terms of biological role, the alpha subunit is responsible for the aldol cleavage of indoleglycerol phosphate to indole and glyceraldehyde 3-phosphate. The chain is Tryptophan synthase alpha chain from Mycobacterium bovis (strain ATCC BAA-935 / AF2122/97).